We begin with the raw amino-acid sequence, 160 residues long: Cytochrome b6-f complex subunit 4 (160 aa).

A run of 3 helical transmembrane segments spans residues 36-56 (LLYM…GLAV), 95-115 (LLGV…PFIE), and 131-151 (TIFL…TLPI).

Belongs to the cytochrome b family. PetD subfamily. In terms of assembly, the 4 large subunits of the cytochrome b6-f complex are cytochrome b6, subunit IV (17 kDa polypeptide, petD), cytochrome f and the Rieske protein, while the 4 small subunits are petG, petL, petM and petN. The complex functions as a dimer.

It localises to the plastid. The protein localises to the chloroplast thylakoid membrane. Its function is as follows. Component of the cytochrome b6-f complex, which mediates electron transfer between photosystem II (PSII) and photosystem I (PSI), cyclic electron flow around PSI, and state transitions. In Staurastrum punctulatum (Green alga), this protein is Cytochrome b6-f complex subunit 4.